The primary structure comprises 144 residues: Large-conductance mechanosensitive channel (144 aa).

Helical transmembrane passes span Val16 to Val36 and Gly86 to Val106.

This sequence belongs to the MscL family. Homopentamer.

It localises to the cell inner membrane. In terms of biological role, channel that opens in response to stretch forces in the membrane lipid bilayer. May participate in the regulation of osmotic pressure changes within the cell. The sequence is that of Large-conductance mechanosensitive channel from Cupriavidus metallidurans (strain ATCC 43123 / DSM 2839 / NBRC 102507 / CH34) (Ralstonia metallidurans).